Here is a 90-residue protein sequence, read N- to C-terminus: DNA-binding protein HU-alpha (90 aa).

The protein belongs to the bacterial histone-like protein family. As to quaternary structure, heterodimer of an alpha and a beta chain.

In terms of biological role, histone-like DNA-binding protein which is capable of wrapping DNA to stabilize it, and thus to prevent its denaturation under extreme environmental conditions. The chain is DNA-binding protein HU-alpha (hupA) from Serratia marcescens.